Here is a 370-residue protein sequence, read N- to C-terminus: 4-hydroxy-3-methylbut-2-en-1-yl diphosphate synthase (flavodoxin) (370 aa).

Positions 270, 273, 305, and 312 each coordinate [4Fe-4S] cluster.

The protein belongs to the IspG family. [4Fe-4S] cluster is required as a cofactor.

The enzyme catalyses (2E)-4-hydroxy-3-methylbut-2-enyl diphosphate + oxidized [flavodoxin] + H2O + 2 H(+) = 2-C-methyl-D-erythritol 2,4-cyclic diphosphate + reduced [flavodoxin]. Its pathway is isoprenoid biosynthesis; isopentenyl diphosphate biosynthesis via DXP pathway; isopentenyl diphosphate from 1-deoxy-D-xylulose 5-phosphate: step 5/6. In terms of biological role, converts 2C-methyl-D-erythritol 2,4-cyclodiphosphate (ME-2,4cPP) into 1-hydroxy-2-methyl-2-(E)-butenyl 4-diphosphate. The polypeptide is 4-hydroxy-3-methylbut-2-en-1-yl diphosphate synthase (flavodoxin) (Azotobacter vinelandii (strain DJ / ATCC BAA-1303)).